Consider the following 720-residue polypeptide: Inactive serine protease PAMR1 (720 aa).

The N-terminal stretch at 1–21 (MELGCWTQLGLTFLQLLLISS) is a signal peptide. Intrachain disulfides connect Cys-128/Cys-150, Cys-177/Cys-199, Cys-239/Cys-250, Cys-244/Cys-260, Cys-262/Cys-271, Cys-280/Cys-329, Cys-315/Cys-342, Cys-414/Cys-442, and Cys-489/Cys-505. The CUB domain occupies 128 to 236 (CGQVLRAPKG…DGFHAIYEEI (109 aa)). The region spanning 235 to 272 (EITACSSSPCFHDGTCVLDKAGSYKCACLAGYTGQRCE) is the EGF-like domain. Sushi domains follow at residues 278–344 (RNCS…ICIK) and 387–444 (APTK…SCIP). One can recognise a Peptidase S1 domain in the interval 445–720 (ICGKIENITA…FKDWIERNMK (276 aa)). N-linked (GlcNAc...) asparagine glycosylation occurs at Asn-614. 2 cysteine pairs are disulfide-bonded: Cys-630/Cys-649 and Cys-661/Cys-697.

This sequence belongs to the peptidase S1 family.

It is found in the secreted. In terms of biological role, may play a role in regeneration of skeletal muscle. The sequence is that of Inactive serine protease PAMR1 (PAMR1) from Homo sapiens (Human).